A 93-amino-acid polypeptide reads, in one-letter code: Conotoxin F_Vc1 (93 aa).

The signal sequence occupies residues 1–22 (MQRGAVLLGVVAFLALWPQAGA). Residues 23–33 (EPYNLNDPDVR) constitute a propeptide that is removed on maturation.

The protein belongs to the conotoxin F superfamily. In terms of processing, contains 4 disulfide bonds. As to expression, expressed by the venom duct.

It is found in the secreted. The chain is Conotoxin F_Vc1 from Conus victoriae (Queen Victoria cone).